The primary structure comprises 197 residues: HTH-type transcriptional regulator BetI (197 aa).

Residues 8–68 (PIRRQQLIQA…ATMRHLMNAL (61 aa)) form the HTH tetR-type domain. The segment at residues 31-50 (SIALIARLAGVSNGIISHYF) is a DNA-binding region (H-T-H motif).

Its pathway is amine and polyamine biosynthesis; betaine biosynthesis via choline pathway [regulation]. Repressor involved in the biosynthesis of the osmoprotectant glycine betaine. It represses transcription of the choline transporter BetT and the genes of BetAB involved in the synthesis of glycine betaine. This is HTH-type transcriptional regulator BetI from Pseudomonas savastanoi pv. phaseolicola (strain 1448A / Race 6) (Pseudomonas syringae pv. phaseolicola (strain 1448A / Race 6)).